The chain runs to 256 residues: Tryptophan synthase alpha chain (256 aa).

Catalysis depends on proton acceptor residues Glu48 and Asp59.

The protein belongs to the TrpA family. Tetramer of two alpha and two beta chains.

The catalysed reaction is (1S,2R)-1-C-(indol-3-yl)glycerol 3-phosphate + L-serine = D-glyceraldehyde 3-phosphate + L-tryptophan + H2O. It functions in the pathway amino-acid biosynthesis; L-tryptophan biosynthesis; L-tryptophan from chorismate: step 5/5. Functionally, the alpha subunit is responsible for the aldol cleavage of indoleglycerol phosphate to indole and glyceraldehyde 3-phosphate. The protein is Tryptophan synthase alpha chain of Caldicellulosiruptor bescii (strain ATCC BAA-1888 / DSM 6725 / KCTC 15123 / Z-1320) (Anaerocellum thermophilum).